The primary structure comprises 215 residues: 3,4-dihydroxy-2-butanone 4-phosphate synthase (215 aa).

D-ribulose 5-phosphate is bound by residues 37 to 38, Asp-42, 150 to 154, and Glu-174; these read RE and RPGHT. Glu-38 is a binding site for Mg(2+). His-153 contributes to the Mg(2+) binding site.

It belongs to the DHBP synthase family. Homodimer. Mg(2+) serves as cofactor. The cofactor is Mn(2+).

It catalyses the reaction D-ribulose 5-phosphate = (2S)-2-hydroxy-3-oxobutyl phosphate + formate + H(+). The protein operates within cofactor biosynthesis; riboflavin biosynthesis; 2-hydroxy-3-oxobutyl phosphate from D-ribulose 5-phosphate: step 1/1. Catalyzes the conversion of D-ribulose 5-phosphate to formate and 3,4-dihydroxy-2-butanone 4-phosphate. This Buchnera aphidicola subsp. Acyrthosiphon pisum (strain 5A) protein is 3,4-dihydroxy-2-butanone 4-phosphate synthase.